The chain runs to 130 residues: Small ribosomal subunit protein uS8 (130 aa).

This sequence belongs to the universal ribosomal protein uS8 family. In terms of assembly, part of the 30S ribosomal subunit. Contacts proteins S5 and S12.

Functionally, one of the primary rRNA binding proteins, it binds directly to 16S rRNA central domain where it helps coordinate assembly of the platform of the 30S subunit. This Hahella chejuensis (strain KCTC 2396) protein is Small ribosomal subunit protein uS8.